An 803-amino-acid chain; its full sequence is Translation initiation factor IF-2 (803 aa).

The segment covering Pro65–Thr75 has biased composition (basic and acidic residues). A disordered region spans residues Pro65–Lys186. The segment covering Asn175 to Leu185 has biased composition (basic residues). The tr-type G domain maps to Ile300–Glu468. Positions Gly309 to Thr316 are G1. GTP is bound at residue Gly309–Thr316. The G2 stretch occupies residues Gly334–His338. The tract at residues Asp355–Gly358 is G3. GTP contacts are provided by residues Asp355–His359 and Asn409–Asp412. Residues Asn409 to Asp412 are G4. A G5 region spans residues Ser445 to Lys447.

Belongs to the TRAFAC class translation factor GTPase superfamily. Classic translation factor GTPase family. IF-2 subfamily.

The protein localises to the cytoplasm. Functionally, one of the essential components for the initiation of protein synthesis. Protects formylmethionyl-tRNA from spontaneous hydrolysis and promotes its binding to the 30S ribosomal subunits. Also involved in the hydrolysis of GTP during the formation of the 70S ribosomal complex. The polypeptide is Translation initiation factor IF-2 (Tropheryma whipplei (strain TW08/27) (Whipple's bacillus)).